The primary structure comprises 325 residues: Quinone oxidoreductase (325 aa).

The protein belongs to the zinc-containing alcohol dehydrogenase family. Quinone oxidoreductase subfamily.

It catalyses the reaction 2 a quinone + NADPH + H(+) = 2 a 1,4-benzosemiquinone + NADP(+). The chain is Quinone oxidoreductase (qor) from Pseudomonas aeruginosa (strain ATCC 15692 / DSM 22644 / CIP 104116 / JCM 14847 / LMG 12228 / 1C / PRS 101 / PAO1).